Reading from the N-terminus, the 482-residue chain is Ribosomal protein uS12 methylthiotransferase RimO (482 aa).

Positions 2–115 (MKVHIITLGC…IAEVVETFQP (114 aa)) constitute an MTTase N-terminal domain. [4Fe-4S] cluster-binding residues include Cys-11, Cys-47, Cys-79, Cys-177, Cys-181, and Cys-184. Residues 163 to 394 (RAVGPSAYLK…MRLQQRISRE (232 aa)) enclose the Radical SAM core domain. The region spanning 397–466 (RRWLGRVVRV…DYDLWGDVVG (70 aa)) is the TRAM domain.

Belongs to the methylthiotransferase family. RimO subfamily. [4Fe-4S] cluster serves as cofactor.

The protein resides in the cytoplasm. The enzyme catalyses L-aspartate(89)-[ribosomal protein uS12]-hydrogen + (sulfur carrier)-SH + AH2 + 2 S-adenosyl-L-methionine = 3-methylsulfanyl-L-aspartate(89)-[ribosomal protein uS12]-hydrogen + (sulfur carrier)-H + 5'-deoxyadenosine + L-methionine + A + S-adenosyl-L-homocysteine + 2 H(+). In terms of biological role, catalyzes the methylthiolation of an aspartic acid residue of ribosomal protein uS12. The polypeptide is Ribosomal protein uS12 methylthiotransferase RimO (Roseiflexus castenholzii (strain DSM 13941 / HLO8)).